We begin with the raw amino-acid sequence, 511 residues long: mRNA export factor (511 aa).

A compositionally biased stretch (low complexity) spans 1 to 15; it reads MATDIDMLIDLGLDL. Residues 1 to 244 are disordered; it reads MATDIDMLID…ERKAPAADTI (244 aa). A Nuclear export signal motif is present at residues 5 to 17; that stretch reads IDMLIDLGLDLSD. A phosphoserine; by host mark is found at Ser16 and Ser18. Acidic residues-rich tracts occupy residues 16 to 26 and 35 to 51; these read SDSDLDEDPPE and LESD…EDME. The interaction with host ALYREF stretch occupies residues 104–112; sequence VWSRLGARR. The Nuclear localization signal motif lies at 110–138; it reads ARRPSCSPEQHGGKVARLQPPPTKAQPAR. Phosphoserine; by host is present on Ser114. Arg138 is modified (dimethylated arginine; by host). The interval 138-152 is RGG-box; the sequence is RGGRRGRRRGRGRGG. The segment covering 139–149 has biased composition (basic residues); the sequence is GGRRGRRRGRG. Arg148 bears the Omega-N-methylarginine; by host mark. Arg150 carries the dimethylated arginine; by host modification. The segment covering 213 to 232 has biased composition (pro residues); that stretch reads APPPLMTLAIAPPPADPRAP. The Zn(2+) site is built by Cys399, His478, Cys482, and Cys487. A CHC2-type zinc finger spans residues 399–487; that stretch reads CYLKARGLCG…HRQECSSRVC (89 aa).

This sequence belongs to the HHV-1 ICP27 protein family. As to quaternary structure, interacts with host RBP1; this interaction facilitates the RNA polymerase recruitment to viral transcription sites. Interacts (via the RGG box) with host ALYREF/THOC4; this interaction recruits ALYREF to viral replication compartments and probably directs viral mRNA to the TAP/NFX1 pathway. Interacts (via the RGG box) with host SRPK1; this interaction relocalizes SRPK1 to the nucleus and seems to alter its activity. Interacts with ICP4; this interaction modulates ICP4 DNA-binding activity. Interacts with host NXF1; this interaction allows efficient export of HSV-1 early and late transcripts. Methylated within the RGG box possibly by host PRMT1. When hypomethylated, ICP27 is exported to the cytoplasm earlier and more rapidly. Post-translationally, phosphorylated.

The protein resides in the host cytoplasm. It is found in the host nucleus. Its function is as follows. Multifunctional regulator of the expression of viral genes that contributes to the shutoff of host protein synthesis and mediates nuclear export of viral intronless mRNAs. Early in infection, this immediate early (EI) protein mediates the inhibition of cellular splicing. This results in the accumulation of unprocessed 3'end pre-mRNAs which can't be exported from the nucleus. Cellular protein synthesis is thereby shut off early after virus infection. Later in the infection, it helps recruit cellular RNA polymerase II to viral replication sites and promotes the nuclear export of viral intronless mRNAs by interacting with mRNAs and host NXF1/TAP. ICP27 binds to NUP62 which may provide facilitated viral mRNA export and may compete with some host cell transport receptors for binding and inhibit cellular nucleocytoplasmic transport pathways. Also stimulates translation of viral transcripts. Repression of host gene expression blocks the cell cycle at the G1 phase and prevents apoptosis. Seems to silence the 3' splice site of the promyelocytic leukemia (PML) intron 7a, thereby switching PML isoforms from PML-II to PML-V. This could be linked to the accelerated mRNA export induced by ICP27 which might not provide sufficient time for PML pre-mRNA to be spliced in the nucleus. In Human herpesvirus 1 (strain HFEM) (HHV-1), this protein is mRNA export factor.